A 90-amino-acid chain; its full sequence is Small ribosomal subunit protein bS16 (90 aa).

This sequence belongs to the bacterial ribosomal protein bS16 family.

This is Small ribosomal subunit protein bS16 from Lactobacillus acidophilus (strain ATCC 700396 / NCK56 / N2 / NCFM).